The following is a 485-amino-acid chain: Aspartyl/glutamyl-tRNA(Asn/Gln) amidotransferase subunit B (485 aa).

Belongs to the GatB/GatE family. GatB subfamily. In terms of assembly, heterotrimer of A, B and C subunits.

It catalyses the reaction L-glutamyl-tRNA(Gln) + L-glutamine + ATP + H2O = L-glutaminyl-tRNA(Gln) + L-glutamate + ADP + phosphate + H(+). The enzyme catalyses L-aspartyl-tRNA(Asn) + L-glutamine + ATP + H2O = L-asparaginyl-tRNA(Asn) + L-glutamate + ADP + phosphate + 2 H(+). In terms of biological role, allows the formation of correctly charged Asn-tRNA(Asn) or Gln-tRNA(Gln) through the transamidation of misacylated Asp-tRNA(Asn) or Glu-tRNA(Gln) in organisms which lack either or both of asparaginyl-tRNA or glutaminyl-tRNA synthetases. The reaction takes place in the presence of glutamine and ATP through an activated phospho-Asp-tRNA(Asn) or phospho-Glu-tRNA(Gln). The polypeptide is Aspartyl/glutamyl-tRNA(Asn/Gln) amidotransferase subunit B (Anaplasma marginale (strain St. Maries)).